The following is a 405-amino-acid chain: Sialic acid transporter NanX (405 aa).

Residues 1 to 20 lie on the Cytoplasmic side of the membrane; sequence MATAWYKQVNPPQRKALFSA. Residues 21-41 traverse the membrane as a helical segment; the sequence is WLGYVFDGFDFMMIFYILHII. Residues 42 to 53 lie on the Periplasmic side of the membrane; it reads KADLGITDIQAT. The chain crosses the membrane as a helical span at residues 54–74; it reads LIGTVAFIARPIGGGFFGAMA. Residues 75–80 are Cytoplasmic-facing; the sequence is DKYGRK. A helical membrane pass occupies residues 81–101; it reads PMMMWAIFIYSVGTGLSGIAT. Asparagine 102 is a topological domain (periplasmic). The helical transmembrane segment at 103–123 threads the bilayer; sequence LYMLAVCRFIVGLGMSGEYAC. The Cytoplasmic portion of the chain corresponds to 124–139; sequence ASTYAVESWPKNLQSK. The helical transmembrane segment at 140-160 threads the bilayer; it reads ASAFLVSGFSVGNIIAAQIIP. The Periplasmic segment spans residues 161–164; that stretch reads QFAE. Residues 165 to 185 form a helical membrane-spanning segment; it reads VYGWRNSFFIGLLPVLLVLWI. Over 186-214 the chain is Cytoplasmic; the sequence is RKSAPESQEWIEDKYKDKSTFLSVFRKPH. A helical transmembrane segment spans residues 215–235; the sequence is LSISMIVFLVCFCLFGANWPI. Residues 236–250 are Periplasmic-facing; it reads NGLLPSYLADNGVNT. Residues 251-271 form a helical membrane-spanning segment; sequence VVISTLMTIAGLGTLTGTIFF. The Cytoplasmic segment spans residues 272 to 282; it reads GFVGDKIGVKK. Residues 283–303 traverse the membrane as a helical segment; the sequence is AFVVGLITSFIFLCPLFFISV. Residues 304-307 are Periplasmic-facing; sequence KNSS. The chain crosses the membrane as a helical span at residues 308-328; the sequence is LIGLCLFGLMFTNLGIAGLVP. Topologically, residues 329–344 are cytoplasmic; it reads KFIYDYFPTKLRGLGT. A helical membrane pass occupies residues 345–365; that stretch reads GLIYNLGATGGMAAPVLATYI. Topologically, residues 366–371 are periplasmic; sequence SGYYGL. A helical transmembrane segment spans residues 372–392; the sequence is GVSLFIVTVAFSALLILLVGF. At 393-405 the chain is on the cytoplasmic side; that stretch reads DIPGKIYKLSVAK.

This sequence belongs to the major facilitator superfamily. Sugar transporter (TC 2.A.1.1) family.

The protein localises to the cell inner membrane. Functionally, probably transports across the inner membrane the two dehydrated forms of N-acetylneuraminate (Neu5Ac), 2,7-anhydro-N-acetylneuraminate (2,7-AN) and 2-deoxy-2,3-didehydro-N-acetylneuraminate (2,3-EN). This is Sialic acid transporter NanX from Escherichia coli (strain K12).